Here is a 355-residue protein sequence, read N- to C-terminus: Epoxide hydrolase 2 (355 aa).

In terms of domain architecture, AB hydrolase-1 spans 78–323 (VLLMVHGFPE…IRGASHWVQQ (246 aa)). The active-site Nucleophile is aspartate 152. The active-site Proton donor is the tyrosine 263. The Proton acceptor role is filled by histidine 319.

Belongs to the AB hydrolase superfamily. Epoxide hydrolase family.

The enzyme catalyses an epoxide + H2O = an ethanediol. It functions in the pathway lipid metabolism. Catalyzes the hydrolysis of epoxide-containing fatty acids. Active in vitro against trans-1,3-diphenylpropene oxide (t-DPPO), epoxyeicosatrienoic acids (EETs) including 8,9-EET, 11,12-EET and 14,15-EET and the linoleic acid metabolites 12,13-epoxy-9-octadecenoate (12,13-EpOME) and 9,10-epoxy-12-octadecenoate (9,10-EpOME). The protein is Epoxide hydrolase 2 of Caenorhabditis elegans.